We begin with the raw amino-acid sequence, 207 residues long: Ciliary microtubule-associated protein 3 (207 aa).

Interacts with proteins involved in ciliary transport, including ARL13B, CETN1, KIF3A, RAB6A, RAB8A, TUBB1 and TUBG1. Interacts with AURKA. Expressed in tissues rich in ciliated cells, such as lung, kidney, vas deferens and testis. Both isoforms 1 and 2 are expressed in testis.

Its subcellular location is the golgi apparatus. It localises to the golgi stack. The protein resides in the trans-Golgi network. It is found in the nucleus. The protein localises to the cytoplasm. Its subcellular location is the cytoplasmic vesicle. During primary cilia disassembly, involved in cilia disassembly. Required specifically to control cilia retraction as well as the liberation and duplication of the basal body/centrosome. May act by stimulating AURKA activity at the basal body in a cell cycle-dependent manner. In Mus musculus (Mouse), this protein is Ciliary microtubule-associated protein 3 (Cimap3).